The following is a 3916-amino-acid chain: Fusarin C synthetase (3916 aa).

One can recognise a Ketosynthase family 3 (KS3) domain in the interval 9-440; it reads KEPIAIIGTS…GTNVHAIIEQ (432 aa). Active-site for beta-ketoacyl synthase activity residues include cysteine 182, histidine 319, and histidine 360. Residues 548 to 869 are malonyl-CoA:ACP transacylase (MAT) domain; that stretch reads VFTGQGAQWP…VTRNIHDVEA (322 aa). The N-terminal hotdog fold stretch occupies residues 935-1068; the sequence is HPLLGARSVE…GQLRVEFSSL (134 aa). The dehydratase (DH) domain stretch occupies residues 935 to 1228; sequence HPLLGARSVE…GLTCTSLLRP (294 aa). The PKS/mFAS DH domain occupies 935 to 1231; it reads HPLLGARSVE…CTSLLRPGPS (297 aa). Histidine 967 acts as the Proton acceptor; for dehydratase activity in catalysis. A C-terminal hotdog fold region spans residues 1084-1231; it reads LTSVDMERFY…CTSLLRPGPS (148 aa). Aspartate 1141 acts as the Proton donor; for dehydratase activity in catalysis. The tract at residues 1350–1584 is C-methyltransferase (CMeT) domain; sequence VGENLPAVVR…YMTSVMLSQA (235 aa). The segment at 2092-2266 is ketoreductase (KR) domain 1; it reads TYLLIGFTGG…AASVMHIGMV (175 aa). Residues 2372 to 2449 enclose the Carrier 1 domain; the sequence is EILAVVEEEF…ELCSTVVSHL (78 aa). Serine 2409 carries the post-translational modification O-(pantetheine 4'-phosphoryl)serine. Positions 2482 to 2511 are disordered; the sequence is ASPTENEPFTIRNSPNSTQVTSESGVDEET. A compositionally biased stretch (polar residues) spans 2486–2505; sequence ENEPFTIRNSPNSTQVTSES. Residues 2522–2806 form a condensation region; the sequence is PLSFAQERLW…VNLLPLRLKL (285 aa). An adenylation region spans residues 2973–3385; sequence FEKCVVNQPD…RIAGDSQIKL (413 aa). The 78-residue stretch at 3493 to 3570 folds into the Carrier 2 domain; it reads KPLTETQERL…EMAAKIDGFT (78 aa). Serine 3530 is subject to O-(pantetheine 4'-phosphoryl)serine. Residues 3612 to 3833 are thiolester reductase (R) domain; sequence LTGATGFLGV…DFVPVDVVAA (222 aa).

In the C-terminal section; belongs to the NRP synthetase family.

It functions in the pathway mycotoxin biosynthesis. In terms of biological role, fusarin C synthetase; part of the gene cluster that mediates the biosynthesis of the mycotoxin fusarin C. Within the cluster, FUS1, FUS2, FUS8 and FUS9 are sufficient for fusarin production. The roles of the other FUS members are yet undetermined. The fusarin C synthetase FUS1 is responsible for the condensation of one acetyl-coenzyme A (CoA) unit with six malonyl-CoA units and the amide linkage of the arising heptaketide and homoserine, subsequently releasing the first intermediate, prefusarin, as an alcohol with an open ring structure. The cytochrome P450 monooxygenase FUS8 participates in multiple oxidation processes at carbon C-20 and is able to use the FUS1 product as substrate, resulting in formation of 20-hydroxy-prefusarin. This reaction seems to be essential before the 2-pyrrolidone ring closure can be catalyzed by FUS2, generating 20-hydroxy-fusarin. FUS8 is able to further oxidizes carbon C-20 after ring closure, resulting in the formation of carboxy-fusarin C. As the last step, FUS9 methylates the hydroxyl group at C-21 to generate fusarin C. Fusarin C can then rearrange to epi-fusarin C, the (z)-isomers, and fusarin A and fusarin D. In Gibberella moniliformis (strain M3125 / FGSC 7600) (Maize ear and stalk rot fungus), this protein is Fusarin C synthetase.